Here is a 268-residue protein sequence, read N- to C-terminus: Tetraspanin-5 (268 aa).

Topologically, residues 1–17 are cytoplasmic; that stretch reads MSGKHYKGPEVSCCIKY. A helical transmembrane segment spans residues 18–38; it reads FIFGFNVIFWFLGIAFLGIGL. Residues 39–61 lie on the Extracellular side of the membrane; it reads WAWNEKGVLSNISSITDLGGFDP. N49 is a glycosylation site (N-linked (GlcNAc...) asparagine). A helical transmembrane segment spans residues 62–82; that stretch reads VWLFLVVGGVMFILGFAGCIG. Residues 83–92 lie on the Cytoplasmic side of the membrane; it reads ALRENTFLLK. Residues 93–113 form a helical membrane-spanning segment; it reads FFSVFLGIIFFLELTAGVLAF. Over 114-232 the chain is Extracellular; it reads VFKDWIKDQL…PQFEKWLQDN (119 aa). 4 cysteine pairs are disulfide-bonded: C153–C221, C154–C186, C170–C180, and C187–C200. 2 N-linked (GlcNAc...) asparagine glycosylation sites follow: N169 and N174. N232 is a glycosylation site (N-linked (GlcNAc...) asparagine). Residues 233 to 253 form a helical membrane-spanning segment; the sequence is LTIVAGIFIGIALLQIFGICL. Topologically, residues 254-268 are cytoplasmic; the sequence is AQNLVSDIEAVRASW.

Belongs to the tetraspanin (TM4SF) family. As to quaternary structure, interacts with ADAM10; the interaction influences ADAM10 substrate specificity, endocytosis and turnover. Post-translationally, palmitoylated.

Its subcellular location is the cell membrane. Its function is as follows. Part of TspanC8 subgroup, composed of 6 members that interact with the transmembrane metalloprotease ADAM10. This interaction is required for ADAM10 exit from the endoplasmic reticulum and for enzymatic maturation and trafficking to the cell surface as well as substrate specificity. Different TspanC8/ADAM10 complexes have distinct substrates. Promotes ADAM10-mediated cleavage of CD44. Seems to regulate VE-cadherin expression in endothelial cells probably through interaction with ADAM10, promoting leukocyte transmigration. The polypeptide is Tetraspanin-5 (TSPAN5) (Bos taurus (Bovine)).